Here is a 318-residue protein sequence, read N- to C-terminus: Olfactory receptor 13C9 (318 aa).

Residues 1–25 are Extracellular-facing; the sequence is MEWENQTILVEFFLKGHSVHPRLEL. Residue N5 is glycosylated (N-linked (GlcNAc...) asparagine). A helical transmembrane segment spans residues 26-46; the sequence is LFFVLIFIMYVVILLGNGTLI. Over 47–54 the chain is Cytoplasmic; that stretch reads LISILDPH. Residues 55-75 traverse the membrane as a helical segment; it reads LHTPMYFFLGNLSFLDICYTT. The Extracellular portion of the chain corresponds to 76-99; that stretch reads TSIPSTLVSFLSERKTISFSGCAV. Residues C97 and C189 are joined by a disulfide bond. Residues 100 to 120 traverse the membrane as a helical segment; it reads QMFLGLAMGTTECVLLGMMAF. The Cytoplasmic portion of the chain corresponds to 121-139; sequence DRYVAICNPLRYPIIMSKN. The helical transmembrane segment at 140-160 threads the bilayer; it reads AYVPMAVGSWFAGIVNSAVQT. At 161-197 the chain is on the extracellular side; sequence TFVVQLPFCRKNVINHFSCEILAVMKLACADISGNEF. The chain crosses the membrane as a helical span at residues 198–217; that stretch reads LMLVATILFTLMPLLLIVIS. Residues 218-237 lie on the Cytoplasmic side of the membrane; it reads YSLIISSILKIHSSEGRSKA. A helical membrane pass occupies residues 238-258; that stretch reads FSTCSAHLTVVIIFYGTILFM. Topologically, residues 259-277 are extracellular; that stretch reads YMKPKSKETLNSDDLDATD. A helical transmembrane segment spans residues 278–298; the sequence is KIISMFYGVMTPMMNPLIYSL. The Cytoplasmic segment spans residues 299-318; it reads RNKDVKEAVKHLPNRRFFSK.

The protein belongs to the G-protein coupled receptor 1 family.

It is found in the cell membrane. Functionally, odorant receptor. In Homo sapiens (Human), this protein is Olfactory receptor 13C9 (OR13C9).